The sequence spans 591 residues: uncharacterized protein (591 aa).

Positions Met-1 to Ala-30 are cleaved as a signal peptide. Cys-31 is lipidated: N-palmitoyl cysteine. A lipid anchor (S-diacylglycerol cysteine) is attached at Cys-31. The segment covering Lys-476 to Glu-488 has biased composition (basic and acidic residues). Disordered regions lie at residues Lys-476 to Asn-497 and Ser-510 to Gly-535. A compositionally biased stretch (low complexity) spans Ser-510–Ser-523.

This sequence to T.pallidum TmpC.

Its subcellular location is the cell membrane. This is an uncharacterized protein from Mycoplasma genitalium (strain ATCC 33530 / DSM 19775 / NCTC 10195 / G37) (Mycoplasmoides genitalium).